A 373-amino-acid polypeptide reads, in one-letter code: tRNA-specific 2-thiouridylase MnmA (373 aa).

Residues 12 to 19 (GMSGGVDS) and M38 each bind ATP. Residues 98–100 (NPD) are interaction with target base in tRNA. The active-site Nucleophile is the C103. Cysteines 103 and 200 form a disulfide. G127 lines the ATP pocket. The tract at residues 150–152 (KDQ) is interaction with tRNA. C200 functions as the Cysteine persulfide intermediate in the catalytic mechanism. The interval 312–313 (RY) is interaction with tRNA.

This sequence belongs to the MnmA/TRMU family.

The protein resides in the cytoplasm. The enzyme catalyses S-sulfanyl-L-cysteinyl-[protein] + uridine(34) in tRNA + AH2 + ATP = 2-thiouridine(34) in tRNA + L-cysteinyl-[protein] + A + AMP + diphosphate + H(+). Catalyzes the 2-thiolation of uridine at the wobble position (U34) of tRNA, leading to the formation of s(2)U34. In Streptococcus pyogenes serotype M3 (strain SSI-1), this protein is tRNA-specific 2-thiouridylase MnmA.